Here is a 597-residue protein sequence, read N- to C-terminus: Period protein homolog lin-42 (597 aa).

Positions 1–44 are disordered; sequence MEPAGHSSATHNIVVPNANPTQPQPLAPAMREEGATLSPPNTWS. Residues 155–223 enclose the PAS domain; the sequence is LQASHVSSNF…VRQAHIDLHN (69 aa). 4 disordered regions span residues 313–335, 418–450, 473–509, and 555–597; these read PVPS…QNQG, KSQS…EALT, DDVP…PPPG, and DGLL…DSQN. Residues 425–438 show a composition bias toward basic and acidic residues; sequence SPAKQDEPFDEKKY. A compositionally biased stretch (polar residues) spans 487–497; it reads IHWTSSSQNHY. Low complexity predominate over residues 561-577; the sequence is GATSTGGASPTSGTNSP.

Its subcellular location is the nucleus. The protein localises to the cytoplasm. Functionally, transcriptional repressor which interacts with the promoter region of target genes. Has a specific role in developmental timing where it regulates temporal expression of a number of miRNAs and mRNAs. Controls temporal cell fate transition during embryonic and early larval development by restricting the expression of specific miRNAs, including let-7, miR-48, lin-4, miR-35 and miR-58. Restricts the accumulation of lin-29 in the hypodermis to the larval L4 stage, thus controlling terminal differentiation of seam cells. Has a role in the miRNA-mediated specification of asymmetric gene expression patterns in gustatory neurons. May also regulate genes involved in other biological processes including transport, small molecule metabolism, and growth. Inhibits dauer formation, by antagonizing daf-12. In terms of biological role, specifically required for maintaining the timing of larval development and molting cycle rhythms. The chain is Period protein homolog lin-42 from Caenorhabditis elegans.